Reading from the N-terminus, the 662-residue chain is MVKYKILVATGDSVFAGSANLVHLWLVGEHGEADLGKQLRPLLGRKTELEVDVPLHLGRLLAVKLRKQKGLLDSDWFCKSITVQGPGTQGEAFFPCYSWVQGKETICLTEGTALKVTDDTQNLFRKYREQELENRRNVYRWGSWKEGLILPIAGSTERDLPRNQRFMKDKDLDFSLSLVKELKNFAIKGTLDFVSRVQKLEDYQKVFPHTKTALPERVRGSWKEDALFGYQFLNGANPMLLRRSMRLPARLVLPPGMEDVQTQLEKELKAGSLFEVDFSLLDGVKPNIIIFKQQYVTAPLVMLKLQPDGRLLPMVIQLQPPRHGCPPPLLFLPSDPPMAWLLAKIWVRSSDFQLHQLQSHLLRGHLMAEVISVATMRSLPSLHPIYKLLAPHFRYTMEINTLARNNLVSEWGIFDLVVSTGSGGHVDILQRATSCLTYRSFCPPDDLADRGLVGVKSSLYAQDALRLWEIISRYVERMVELFYRSDTDVKEDPELQVWCREVTEVGLLGAQDRGFPLSLESRAELCRFVAMCIFTCTGQHASTHLGQLDWYAWIPNGPCTMRKPPPISKDVTERDIVDSLPCLQQARMQITVTKFLGRRQPVMVALGQHKEEYFSGPRPRDVLKQFQEELAIMDKEIEVRNASLDLPYEYLRPSLVENSVTI.

A PLAT domain is found at 2–114 (VKYKILVATG…TICLTEGTAL (113 aa)). Positions 115–662 (KVTDDTQNLF…PSLVENSVTI (548 aa)) constitute a Lipoxygenase domain. The Fe cation site is built by histidine 360, histidine 365, histidine 540, and isoleucine 662.

The protein belongs to the lipoxygenase family. The cofactor is Fe cation. In terms of tissue distribution, expressed in epidermis.

The protein resides in the cytoplasm. The catalysed reaction is (5Z,8Z,11Z,14Z)-eicosatetraenoate + O2 = (12S)-hydroperoxy-(5Z,8Z,10E,14Z)-eicosatetraenoate. It catalyses the reaction 1-O-methyl-(9Z,12Z)-octadecadienoate + O2 = 1-O-methyl-(13S)-hydroperoxy-(9Z,11E)-octadecadienoate. It carries out the reaction (8Z,11Z,14Z)-eicosatrienoate + O2 = (12S)-hydroperoxy-(8Z,10E,14Z)-eicosatrienoate. The enzyme catalyses (5Z,8Z,11Z)-eicosatrienoate + O2 = (12S)-hydroperoxy-(5Z,8Z,10E)-eicosatrienoate. The catalysed reaction is 1-O-methyl-(5Z,8Z,11Z,14Z)-eicosatetraenoate + O2 = 1-O-methyl-(12S)-hydroperoxy-(5Z,8Z,10E,14Z)-eicosatetraenoate. It catalyses the reaction (9Z,12Z)-octadecadienoate + O2 = (13S)-hydroperoxy-(9Z,11E)-octadecadienoate. It carries out the reaction (4Z,7Z,10Z,13Z,16Z,19Z)-docosahexaenoate + O2 = (14S)-hydroperoxy-(4Z,7Z,10Z,12E,16Z,19Z)-docosahexaenoate. Its pathway is lipid metabolism; hydroperoxy eicosatetraenoic acid biosynthesis. Its activity is regulated as follows. Arachidonate 12-lipoxygenase activity is decreased when the pH decreases from 7.4 to 6.0. Functionally, catalyzes the regio and stereo-specific incorporation of a single molecule of dioxygen into free and esterified polyunsaturated fatty acids generating lipid hydroperoxides that can be further reduced to the corresponding hydroxy species. Shows increasing catalytic activity within the series arachidonic acid &lt; 5,8,11-eicosatrienoic acid &lt; linoleic acid &lt; 8,11,14-eicosatrienoic acid. The sequence is that of Polyunsaturated fatty acid (12S)/(13S)-lipoxygenase, epidermal-type from Mus musculus (Mouse).